The following is a 197-amino-acid chain: Adenylyl-sulfate kinase (197 aa).

33 to 40 (GLSGSGKS) contributes to the ATP binding site. Ser-107 acts as the Phosphoserine intermediate in catalysis.

Belongs to the APS kinase family.

The enzyme catalyses adenosine 5'-phosphosulfate + ATP = 3'-phosphoadenylyl sulfate + ADP + H(+). It functions in the pathway sulfur metabolism; hydrogen sulfide biosynthesis; sulfite from sulfate: step 2/3. Functionally, catalyzes the synthesis of activated sulfate. This Bacillus pumilus (strain SAFR-032) protein is Adenylyl-sulfate kinase.